The chain runs to 364 residues: Dimethylsulfoniopropionate demethylase DmdA (364 aa).

The protein belongs to the GcvT family. DmdA subfamily.

The enzyme catalyses S,S-dimethyl-beta-propiothetin + (6S)-5,6,7,8-tetrahydrofolate = 3-(methylsulfanyl)propanoate + (6S)-5-methyl-5,6,7,8-tetrahydrofolate + H(+). Its function is as follows. Involved in the assimilation of dimethylsulphoniopropionate (DMSP), an important compound in the fixation of carbon in marine phytoplankton, by mediating demethylation of dimethylsulfoniopropionate (DMSP) to methyl-mercaptopropionate (MMPA). The intracellular concentration of DMSP is estimated to be 70 mM. This Ruegeria pomeroyi (strain ATCC 700808 / DSM 15171 / DSS-3) (Silicibacter pomeroyi) protein is Dimethylsulfoniopropionate demethylase DmdA.